A 366-amino-acid polypeptide reads, in one-letter code: Molybdenum import ATP-binding protein ModC (366 aa).

The ABC transporter domain maps to Met1–Ser231. Residue Gly33–Thr40 coordinates ATP. A Mop domain is found at Ala292–Asp361.

The protein belongs to the ABC transporter superfamily. Molybdate importer (TC 3.A.1.8) family. In terms of assembly, the complex is composed of two ATP-binding proteins (ModC), two transmembrane proteins (ModB) and a solute-binding protein (ModA).

The protein localises to the cell inner membrane. It catalyses the reaction molybdate(out) + ATP + H2O = molybdate(in) + ADP + phosphate + H(+). Functionally, part of the ABC transporter complex ModABC involved in molybdenum import. Responsible for energy coupling to the transport system. The protein is Molybdenum import ATP-binding protein ModC of Vibrio cholerae serotype O1 (strain ATCC 39315 / El Tor Inaba N16961).